Reading from the N-terminus, the 428-residue chain is Glucose-1-phosphate adenylyltransferase (428 aa).

Residues Tyr-99, Gly-164, 179 to 180 (EK), and Ser-190 each bind alpha-D-glucose 1-phosphate.

This sequence belongs to the bacterial/plant glucose-1-phosphate adenylyltransferase family. In terms of assembly, homotetramer.

The catalysed reaction is alpha-D-glucose 1-phosphate + ATP + H(+) = ADP-alpha-D-glucose + diphosphate. It functions in the pathway glycan biosynthesis; glycogen biosynthesis. Involved in the biosynthesis of ADP-glucose, a building block required for the elongation reactions to produce glycogen. Catalyzes the reaction between ATP and alpha-D-glucose 1-phosphate (G1P) to produce pyrophosphate and ADP-Glc. The protein is Glucose-1-phosphate adenylyltransferase of Thermomicrobium roseum (strain ATCC 27502 / DSM 5159 / P-2).